The sequence spans 285 residues: (3S)-malyl-CoA thioesterase (285 aa).

Substrate-binding residues include Arg-70 and Glu-122. Glu-122 and Asp-148 together coordinate Mg(2+).

This sequence belongs to the HpcH/HpaI aldolase family. In terms of assembly, homodimer or homotrimer. Requires Mg(2+) as cofactor.

The catalysed reaction is (S)-malyl-CoA + H2O = (S)-malate + CoA + H(+). With respect to regulation, reversibly inhibited by EDTA. Stimulated by the divalent cations Mg(2+) and Mn(2+). Catalyzes the hydrolysis of (3S)-malyl-CoA to (3S)-malate and free CoA. Inactive towards beta-methylmalyl-CoA and other CoA esters. This is (3S)-malyl-CoA thioesterase from Cereibacter sphaeroides (strain ATCC 17023 / DSM 158 / JCM 6121 / CCUG 31486 / LMG 2827 / NBRC 12203 / NCIMB 8253 / ATH 2.4.1.) (Rhodobacter sphaeroides).